The chain runs to 272 residues: Putative pyruvate, phosphate dikinase regulatory protein (272 aa).

149 to 156 (GVSRTSKT) provides a ligand contact to ADP.

The protein belongs to the pyruvate, phosphate/water dikinase regulatory protein family. PDRP subfamily.

The enzyme catalyses N(tele)-phospho-L-histidyl/L-threonyl-[pyruvate, phosphate dikinase] + ADP = N(tele)-phospho-L-histidyl/O-phospho-L-threonyl-[pyruvate, phosphate dikinase] + AMP + H(+). It carries out the reaction N(tele)-phospho-L-histidyl/O-phospho-L-threonyl-[pyruvate, phosphate dikinase] + phosphate + H(+) = N(tele)-phospho-L-histidyl/L-threonyl-[pyruvate, phosphate dikinase] + diphosphate. Bifunctional serine/threonine kinase and phosphorylase involved in the regulation of the pyruvate, phosphate dikinase (PPDK) by catalyzing its phosphorylation/dephosphorylation. In Lactiplantibacillus plantarum (strain ATCC BAA-793 / NCIMB 8826 / WCFS1) (Lactobacillus plantarum), this protein is Putative pyruvate, phosphate dikinase regulatory protein.